Consider the following 538-residue polypeptide: RNA-binding protein RO60 (538 aa).

The TROVE domain maps to 16-369 (VPNSEGCYVW…SFKLVEPTGK (354 aa)). The interval 120-284 (RIPTHLFTFI…DMPLTALLRN (165 aa)) is RNA-binding. The VWFA-like domain stretch occupies residues 361–538 (FKLVEPTGKR…VIRNFTLDLI (178 aa)). Residues serine 378, serine 380, and threonine 445 each contribute to the a divalent metal cation site.

Belongs to the Ro 60 kDa family.

Its subcellular location is the cytoplasm. Functionally, RNA-binding protein that binds to misfolded non-coding RNAs, pre-5S rRNA, and several small cytoplasmic RNA molecules known as Y RNAs. May play roles in cilia formation and/or maintenance. The chain is RNA-binding protein RO60 from Xenopus laevis (African clawed frog).